We begin with the raw amino-acid sequence, 216 residues long: Somatotropin (216 aa).

An N-terminal signal peptide occupies residues 1 to 26 (MAADSQTPWLLTFSLLCLLWPQEAGA). H45 provides a ligand contact to Zn(2+). Cysteines 78 and 189 form a disulfide. Phosphoserine is present on S131. E198 is a Zn(2+) binding site. C206 and C214 are disulfide-bonded.

Belongs to the somatotropin/prolactin family.

The protein localises to the secreted. Its function is as follows. Plays an important role in growth control. Its major role in stimulating body growth is to stimulate the liver and other tissues to secrete IGF1. It stimulates both the differentiation and proliferation of myoblasts. It also stimulates amino acid uptake and protein synthesis in muscle and other tissues. The chain is Somatotropin (Gh1) from Rattus norvegicus (Rat).